The following is a 177-amino-acid chain: Large ribosomal subunit protein uL6 (177 aa).

The protein belongs to the universal ribosomal protein uL6 family. Part of the 50S ribosomal subunit.

Its function is as follows. This protein binds to the 23S rRNA, and is important in its secondary structure. It is located near the subunit interface in the base of the L7/L12 stalk, and near the tRNA binding site of the peptidyltransferase center. This is Large ribosomal subunit protein uL6 from Klebsiella pneumoniae subsp. pneumoniae (strain ATCC 700721 / MGH 78578).